The primary structure comprises 141 residues: Hemoglobin subunit alpha (141 aa).

The region spanning 1 to 141 is the Globin domain; the sequence is VLSPADKSNV…VSTVLTSKYR (141 aa). Residue serine 3 is modified to Phosphoserine. Residues lysine 7 and lysine 11 each carry the N6-succinyllysine modification. The residue at position 16 (lysine 16) is an N6-acetyllysine; alternate. Position 16 is an N6-succinyllysine; alternate (lysine 16). The residue at position 24 (tyrosine 24) is a Phosphotyrosine. A Phosphoserine modification is found at serine 35. An N6-succinyllysine modification is found at lysine 40. Serine 49 is subject to Phosphoserine. Position 58 (histidine 58) interacts with O2. Histidine 87 serves as a coordination point for heme b. Position 102 is a phosphoserine (serine 102). Position 108 is a phosphothreonine (threonine 108). A phosphoserine mark is found at serine 124 and serine 131. Phosphothreonine is present on residues threonine 134 and threonine 137. At serine 138 the chain carries Phosphoserine.

This sequence belongs to the globin family. As to quaternary structure, heterotetramer of two alpha chains and two beta chains. Red blood cells.

In terms of biological role, involved in oxygen transport from the lung to the various peripheral tissues. Hemopressin acts as an antagonist peptide of the cannabinoid receptor CNR1. Hemopressin-binding efficiently blocks cannabinoid receptor CNR1 and subsequent signaling. The polypeptide is Hemoglobin subunit alpha (HBA) (Saguinus mystax (Moustached tamarin)).